The primary structure comprises 197 residues: ATP-dependent Clp protease proteolytic subunit (197 aa).

Ser101 (nucleophile) is an active-site residue. Residue His126 is part of the active site.

The protein belongs to the peptidase S14 family. Component of the chloroplastic Clp protease core complex.

The protein localises to the plastid. Its subcellular location is the chloroplast stroma. The catalysed reaction is Hydrolysis of proteins to small peptides in the presence of ATP and magnesium. alpha-casein is the usual test substrate. In the absence of ATP, only oligopeptides shorter than five residues are hydrolyzed (such as succinyl-Leu-Tyr-|-NHMec, and Leu-Tyr-Leu-|-Tyr-Trp, in which cleavage of the -Tyr-|-Leu- and -Tyr-|-Trp bonds also occurs).. In terms of biological role, cleaves peptides in various proteins in a process that requires ATP hydrolysis. Has a chymotrypsin-like activity. Plays a major role in the degradation of misfolded proteins. The polypeptide is ATP-dependent Clp protease proteolytic subunit (Daucus carota (Wild carrot)).